Here is a 152-residue protein sequence, read N- to C-terminus: Protein-export protein SecB (152 aa).

It belongs to the SecB family. As to quaternary structure, homotetramer, a dimer of dimers. One homotetramer interacts with 1 SecA dimer.

It localises to the cytoplasm. Its function is as follows. One of the proteins required for the normal export of preproteins out of the cell cytoplasm. It is a molecular chaperone that binds to a subset of precursor proteins, maintaining them in a translocation-competent state. It also specifically binds to its receptor SecA. This chain is Protein-export protein SecB, found in Verminephrobacter eiseniae (strain EF01-2).